Reading from the N-terminus, the 347-residue chain is N6-Methyl-AMP deaminase-L (347 aa).

Zn(2+) is bound by residues His-19 and His-21. N(6)-methyl-AMP contacts are provided by residues His-21, Asn-23, His-69, 101–104 (STPR), Asp-142, and Gly-175. His-202 contributes to the Zn(2+) binding site. N(6)-methyl-AMP is bound by residues Glu-205, Asp-283, and Asp-284. The Proton donor role is filled by Glu-205. Asp-283 contributes to the Zn(2+) binding site.

This sequence belongs to the metallo-dependent hydrolases superfamily. Adenosine and AMP deaminases family. As to quaternary structure, monomer. The cofactor is Zn(2+).

The enzyme catalyses N(6)-methyl-AMP + H2O + H(+) = IMP + methylamine. Catalyzes the hydrolysis of the free cytosolic methylated adenosine nucleotide N(6)-methyl-AMP (N6-mAMP) to produce inositol monophosphate (IMP) and methylamine. Is required for the catabolism of cytosolic N6-mAMP, which is derived from the degradation of mRNA containing N6-methylated adenine (m6A). This Xenopus laevis (African clawed frog) protein is N6-Methyl-AMP deaminase-L (mapda.L).